The sequence spans 465 residues: ATP synthase subunit beta (465 aa).

Position 152–159 (G152–T159) interacts with ATP.

It belongs to the ATPase alpha/beta chains family. F-type ATPases have 2 components, CF(1) - the catalytic core - and CF(0) - the membrane proton channel. CF(1) has five subunits: alpha(3), beta(3), gamma(1), delta(1), epsilon(1). CF(0) has three main subunits: a(1), b(2) and c(9-12). The alpha and beta chains form an alternating ring which encloses part of the gamma chain. CF(1) is attached to CF(0) by a central stalk formed by the gamma and epsilon chains, while a peripheral stalk is formed by the delta and b chains.

It localises to the cell inner membrane. The enzyme catalyses ATP + H2O + 4 H(+)(in) = ADP + phosphate + 5 H(+)(out). Its function is as follows. Produces ATP from ADP in the presence of a proton gradient across the membrane. The catalytic sites are hosted primarily by the beta subunits. The polypeptide is ATP synthase subunit beta (Campylobacter curvus (strain 525.92)).